Here is a 202-residue protein sequence, read N- to C-terminus: Holliday junction resolvase RecU (202 aa).

Mg(2+) is bound by residues Thr-85, Asp-87, Glu-100, and Gln-119.

This sequence belongs to the RecU family. It depends on Mg(2+) as a cofactor.

The protein resides in the cytoplasm. It catalyses the reaction Endonucleolytic cleavage at a junction such as a reciprocal single-stranded crossover between two homologous DNA duplexes (Holliday junction).. Its function is as follows. Endonuclease that resolves Holliday junction intermediates in genetic recombination. Cleaves mobile four-strand junctions by introducing symmetrical nicks in paired strands. Promotes annealing of linear ssDNA with homologous dsDNA. Required for DNA repair, homologous recombination and chromosome segregation. This is Holliday junction resolvase RecU from Streptococcus equi subsp. zooepidemicus (strain MGCS10565).